We begin with the raw amino-acid sequence, 273 residues long: Dermonecrotic toxin LhSicTox-alphaIA2avii (273 aa).

Residue H5 is part of the active site. 2 residues coordinate Mg(2+): E25 and D27. The active-site Nucleophile is H41. 2 disulfide bridges follow: C45–C51 and C47–C190. D85 is a Mg(2+) binding site.

The protein belongs to the arthropod phospholipase D family. Class II subfamily. Requires Mg(2+) as cofactor. As to expression, expressed by the venom gland.

It localises to the secreted. It catalyses the reaction an N-(acyl)-sphingosylphosphocholine = an N-(acyl)-sphingosyl-1,3-cyclic phosphate + choline. The catalysed reaction is an N-(acyl)-sphingosylphosphoethanolamine = an N-(acyl)-sphingosyl-1,3-cyclic phosphate + ethanolamine. The enzyme catalyses a 1-acyl-sn-glycero-3-phosphocholine = a 1-acyl-sn-glycero-2,3-cyclic phosphate + choline. It carries out the reaction a 1-acyl-sn-glycero-3-phosphoethanolamine = a 1-acyl-sn-glycero-2,3-cyclic phosphate + ethanolamine. Functionally, dermonecrotic toxins cleave the phosphodiester linkage between the phosphate and headgroup of certain phospholipids (sphingolipid and lysolipid substrates), forming an alcohol (often choline) and a cyclic phosphate. This toxin acts on sphingomyelin (SM). It may also act on ceramide phosphoethanolamine (CPE), lysophosphatidylcholine (LPC) and lysophosphatidylethanolamine (LPE), but not on lysophosphatidylserine (LPS), and lysophosphatidylglycerol (LPG). It acts by transphosphatidylation, releasing exclusively cyclic phosphate products as second products. Induces dermonecrosis, hemolysis, increased vascular permeability, edema, inflammatory response, and platelet aggregation. The sequence is that of Dermonecrotic toxin LhSicTox-alphaIA2avii from Loxosceles hirsuta (Recluse spider).